We begin with the raw amino-acid sequence, 288 residues long: ATP synthase gamma chain (288 aa).

It belongs to the ATPase gamma chain family. As to quaternary structure, F-type ATPases have 2 components, CF(1) - the catalytic core - and CF(0) - the membrane proton channel. CF(1) has five subunits: alpha(3), beta(3), gamma(1), delta(1), epsilon(1). CF(0) has three main subunits: a, b and c.

Its subcellular location is the cell membrane. Produces ATP from ADP in the presence of a proton gradient across the membrane. The gamma chain is believed to be important in regulating ATPase activity and the flow of protons through the CF(0) complex. The polypeptide is ATP synthase gamma chain (Symbiobacterium thermophilum (strain DSM 24528 / JCM 14929 / IAM 14863 / T)).